A 464-amino-acid chain; its full sequence is 3-isopropylmalate dehydratase large subunit (464 aa).

Positions 337, 397, and 400 each coordinate [4Fe-4S] cluster.

Belongs to the aconitase/IPM isomerase family. LeuC type 1 subfamily. In terms of assembly, heterodimer of LeuC and LeuD. [4Fe-4S] cluster serves as cofactor.

It carries out the reaction (2R,3S)-3-isopropylmalate = (2S)-2-isopropylmalate. It participates in amino-acid biosynthesis; L-leucine biosynthesis; L-leucine from 3-methyl-2-oxobutanoate: step 2/4. Catalyzes the isomerization between 2-isopropylmalate and 3-isopropylmalate, via the formation of 2-isopropylmaleate. The chain is 3-isopropylmalate dehydratase large subunit from Bacillus cereus (strain 03BB102).